A 272-amino-acid chain; its full sequence is Hydroxyethylthiazole kinase (272 aa).

M44 contacts substrate. Positions 119 and 172 each coordinate ATP. G199 contributes to the substrate binding site.

The protein belongs to the Thz kinase family. The cofactor is Mg(2+).

It catalyses the reaction 5-(2-hydroxyethyl)-4-methylthiazole + ATP = 4-methyl-5-(2-phosphooxyethyl)-thiazole + ADP + H(+). Its pathway is cofactor biosynthesis; thiamine diphosphate biosynthesis; 4-methyl-5-(2-phosphoethyl)-thiazole from 5-(2-hydroxyethyl)-4-methylthiazole: step 1/1. Functionally, catalyzes the phosphorylation of the hydroxyl group of 4-methyl-5-beta-hydroxyethylthiazole (THZ). The chain is Hydroxyethylthiazole kinase from Enterococcus faecalis (strain ATCC 700802 / V583).